The primary structure comprises 252 residues: MSAPRTCYGIIPARYASSRFPGKPLADILGRPMFWHVYDRARRCAAFDEVALATDDARIADAANVLGVPCVMTAEHHPSGTDRVHEAAMRLGVADDAVVVNIQGDEPALDPRMLDQLVAPFADASVRVATLAMALSAQEAQSPDRVKVVVAANGDALYFSRADIPFVRDGDVGGDTAGRLGHIGLYAFRMEALRRFTQLPPSRLEQTEKLEQLRLLENGIAIRVVPTTYRTHGVDRPEDIDVIINLLRENDG.

It belongs to the KdsB family.

The protein resides in the cytoplasm. It catalyses the reaction 3-deoxy-alpha-D-manno-oct-2-ulosonate + CTP = CMP-3-deoxy-beta-D-manno-octulosonate + diphosphate. Its pathway is nucleotide-sugar biosynthesis; CMP-3-deoxy-D-manno-octulosonate biosynthesis; CMP-3-deoxy-D-manno-octulosonate from 3-deoxy-D-manno-octulosonate and CTP: step 1/1. The protein operates within bacterial outer membrane biogenesis; lipopolysaccharide biosynthesis. Activates KDO (a required 8-carbon sugar) for incorporation into bacterial lipopolysaccharide in Gram-negative bacteria. The sequence is that of 3-deoxy-manno-octulosonate cytidylyltransferase from Nitratidesulfovibrio vulgaris (strain DP4) (Desulfovibrio vulgaris).